A 276-amino-acid polypeptide reads, in one-letter code: Formamidopyrimidine-DNA glycosylase (276 aa).

P2 acts as the Schiff-base intermediate with DNA in catalysis. E3 serves as the catalytic Proton donor. K59 serves as the catalytic Proton donor; for beta-elimination activity. DNA contacts are provided by H92, R111, and K155. The segment at 239 to 273 adopts an FPG-type zinc-finger fold; sequence AVYGQTGAPCPRCGTAIEKIKVGGRGTHFCPTCQQ. R263 acts as the Proton donor; for delta-elimination activity in catalysis.

Belongs to the FPG family. Monomer. It depends on Zn(2+) as a cofactor.

It carries out the reaction Hydrolysis of DNA containing ring-opened 7-methylguanine residues, releasing 2,6-diamino-4-hydroxy-5-(N-methyl)formamidopyrimidine.. The catalysed reaction is 2'-deoxyribonucleotide-(2'-deoxyribose 5'-phosphate)-2'-deoxyribonucleotide-DNA = a 3'-end 2'-deoxyribonucleotide-(2,3-dehydro-2,3-deoxyribose 5'-phosphate)-DNA + a 5'-end 5'-phospho-2'-deoxyribonucleoside-DNA + H(+). Involved in base excision repair of DNA damaged by oxidation or by mutagenic agents. Acts as a DNA glycosylase that recognizes and removes damaged bases. Has a preference for oxidized purines, such as 7,8-dihydro-8-oxoguanine (8-oxoG). Has AP (apurinic/apyrimidinic) lyase activity and introduces nicks in the DNA strand. Cleaves the DNA backbone by beta-delta elimination to generate a single-strand break at the site of the removed base with both 3'- and 5'-phosphates. The chain is Formamidopyrimidine-DNA glycosylase from Exiguobacterium sibiricum (strain DSM 17290 / CCUG 55495 / CIP 109462 / JCM 13490 / 255-15).